The following is a 419-amino-acid chain: Methyltransferase/ribosomally synthesized type I borosin cyclic peptide precursor gjuMa (419 aa).

Residues 1-255 (MATPIATTTN…AISTLYVPPR (255 aa)) form a methyltransferase domain region. Catalysis depends on residues Arg79, Tyr83, and Tyr105. Residues Tyr105, His107, Val110, Ala137, Gln179, Gly217, Ser248, and Thr249 each contribute to the S-adenosyl-L-methionine site. Residues 256-381 (DISPVDPTMA…GAVYALMSRP (126 aa)) form a clasp domain region. Positions 382 to 404 (TGDIAREKELTNDEIANNHGAPY) are precursor leader. Ser408 carries the N-methylserine modification. Ala409 carries the post-translational modification N-methylalanine. Val410 is modified (N-methylvaline). An N-methylisoleucine mark is found at Ile411 and Ile412. N-methylalanine occurs at positions 413 and 414. N-methylisoleucine occurs at positions 415 and 416.

It in the N-terminal section; belongs to the precorrin methyltransferase family. As to quaternary structure, homodimer. GjuMA automethylates at Ser-408, Ala-409, Val-410, Ile-411, Ile-412, Ala-413, Ala-414, Ile-415 and Ile-416 before being processed by ae prolyloligopeptidase which likely forms a peptidyl ester upon removal of the follower propeptide, which then undergoes macrocyclization with the N-terminus of the modified core peptide. Peptide backbone alpha-N-methylations change the physicochemical properties of amide bonds to provide structural constraints and other favorable characteristics including biological membrane permeability to peptides.

Its pathway is secondary metabolite biosynthesis. In terms of biological role, fusion protein of the methyltransferase gjuM and the type I borosin core peptide; part of the gene cluster that mediates the biosynthesis of a type I borosin, a highly methylated cyclic peptide with potent biological activities. Type I borosins derive from the C-terminus of the fusion protein, and it is the same protein that methylates its own C-terminus using S-adenosyl methionine (SAM). The C-terminus is subsequently cleaved off and macrocyclized by a prolyloligopeptidase to give the final product. The sequence is that of Methyltransferase/ribosomally synthesized type I borosin cyclic peptide precursor gjuMa from Gymnopilus junonius (Spectacular rustgill mushroom).